A 1108-amino-acid polypeptide reads, in one-letter code: Activity-dependent neuroprotector homeobox protein (1108 aa).

The segment at Met1–His685 is binds to beta-catenin/CTNNB1. Glycyl lysine isopeptide (Lys-Gly) (interchain with G-Cter in SUMO2) cross-links involve residues Lys39 and Lys72. The segment at Phe74–His97 adopts a C2H2-type 1; degenerate zinc-finger fold. Residue Ser98 is modified to Phosphoserine. The segment at Leu107–His129 adopts a C2H2-type 2; degenerate zinc-finger fold. Residues Ser133–Pro154 form a disordered region. Basic and acidic residues predominate over residues Phe143 to Pro154. Glycyl lysine isopeptide (Lys-Gly) (interchain with G-Cter in SUMO2) cross-links involve residues Lys144 and Lys155. The C2H2-type 3; degenerate zinc finger occupies Tyr165–His188. Residues Lys203, Lys231, Lys266, Lys274, Lys278, Lys279, Lys311, and Lys335 each participate in a glycyl lysine isopeptide (Lys-Gly) (interchain with G-Cter in SUMO2) cross-link. A C2H2-type 4; degenerate zinc finger spans residues Ile221–His244. Arg348 carries the post-translational modification Asymmetric dimethylarginine. The neuroprotective peptide; contributes to CTNNB1-binding, but less effective than whole N-terminal region stretch occupies residues Asn354–Gln361. The interval Pro360–Asn438 is disordered. Residues Lys367 and Lys407 each participate in a glycyl lysine isopeptide (Lys-Gly) (interchain with G-Cter in SUMO2) cross-link. Over residues Ser393–Gln422 the composition is skewed to polar residues. A phosphoserine mark is found at Ser408 and Ser412. Lys426 participates in a covalent cross-link: Glycyl lysine isopeptide (Lys-Gly) (interchain with G-Cter in SUMO2). The span at Lys426–Ser437 shows a compositional bias: pro residues. A C2H2-type 5; atypical zinc finger spans residues Lys446–His468. 2 C2H2-type zinc fingers span residues Ser488–His509 and Leu511–His534. Glycyl lysine isopeptide (Lys-Gly) (interchain with G-Cter in SUMO2) cross-links involve residues Lys599 and Lys605. Phosphoserine is present on Ser607. Residues Lys615, Lys620, Lys631, and Lys657 each participate in a glycyl lysine isopeptide (Lys-Gly) (interchain with G-Cter in SUMO2) cross-link. Residues Thr621 to His646 form a C2H2-type 8; atypical zinc finger. A C2H2-type 9; atypical zinc finger spans residues Tyr661 to His685. Residues Gly690–Leu711 form a disordered region. Residues Lys691 to Pro709 show a composition bias toward polar residues. Lys698 is covalently cross-linked (Glycyl lysine isopeptide (Lys-Gly) (interchain with G-Cter in SUMO2)). Position 708 is a phosphoserine (Ser708). Residues Lys715, Lys727, and Lys730 each participate in a glycyl lysine isopeptide (Lys-Gly) (interchain with G-Cter in SUMO2) cross-link. Ser737 carries the phosphoserine modification. A Glycyl lysine isopeptide (Lys-Gly) (interchain with G-Cter in SUMO2) cross-link involves residue Lys744. The segment at residues Leu753 to Asp813 is a DNA-binding region (homeobox). Ser804 bears the Phosphoserine mark. Glycyl lysine isopeptide (Lys-Gly) (interchain with G-Cter in SUMO2) cross-links involve residues Lys806, Lys828, and Lys834. Basic and acidic residues predominate over residues Lys851–His880. Residues Lys851–Ser1037 form a disordered region. A phosphoserine mark is found at Ser875, Ser877, Ser885, Ser888, and Ser904. Residues Lys913, Lys928, and Lys941 each participate in a glycyl lysine isopeptide (Lys-Gly) (interchain with G-Cter in SUMO2) cross-link. Residues Lys928 to Asp938 are compositionally biased toward acidic residues. Basic and acidic residues predominate over residues Gly939 to Ser959. A phosphoserine mark is found at Ser959 and Ser961. Over residues Pro977–Ser988 the composition is skewed to polar residues. Lys1022 participates in a covalent cross-link: Glycyl lysine isopeptide (Lys-Gly) (interchain with G-Cter in SUMO2). Lys1041 and Lys1048 each carry N6-acetyllysine; alternate. Residues Lys1041 and Lys1048 each participate in a glycyl lysine isopeptide (Lys-Gly) (interchain with G-Cter in SUMO2); alternate cross-link. The tract at residues Gln1050–Ala1108 is disordered. Ser1077 is modified (phosphoserine).

In terms of assembly, interacts (via N-terminal region) with beta-catenin/CTNNB1 (via the central armadillo domains); interaction is direct and stabilizes CTNNB1 by modulating its phosphorylation by glycogen synthase kinase-3 beta GSK3B. Expressed in the brain, with a higher expression in cerebellum and hippocampus. Weakly expressed in lung, kidney and intestine, and expressed at intermediate level in testis.

Its subcellular location is the nucleus. It localises to the chromosome. May be involved in transcriptional regulation. May mediate some of the neuroprotective peptide VIP-associated effects involving normal growth and cancer proliferation. Positively modulates WNT-beta-catenin/CTNN1B signaling, acting by regulating phosphorylation of, and thereby stabilizing, CTNNB1. May be required for neural induction and neuronal differentiation. May be involved in erythroid differentiation. The chain is Activity-dependent neuroprotector homeobox protein (Adnp) from Mus musculus (Mouse).